We begin with the raw amino-acid sequence, 713 residues long: RNA-binding protein vts1 (713 aa).

Over residues 154–188 (NSGLSLDKSLPSSPKGDSPSLSSSLPSLTTKSNLS) the composition is skewed to low complexity. Disordered regions lie at residues 154–208 (NSGL…SSKH), 254–336 (EPPA…RDRG), 356–389 (DESSRSRWSNISYSPPPPPPPPELLNHSPKSRPL), 554–596 (EKIE…GNEL), and 667–713 (KAAK…SSMD). 2 stretches are compositionally biased toward polar residues: residues 189–208 (GNLNMVTPASTQGPAFSSKH) and 258–281 (SSASTSPRNTPTPSNNGTSINANV). 2 stretches are compositionally biased toward low complexity: residues 282–297 (TSSLTSNSTGKTSKTT) and 304–320 (SKKSLPSNSTPSKPNTS). Positions 321 to 330 (FFETPHNNIW) are enriched in polar residues. Pro residues predominate over residues 369 to 378 (SPPPPPPPPE). Polar residues predominate over residues 559–569 (PPNNSKNQTYR). Residues 570-583 (RSSRGSNKTRKSIS) show a composition bias toward basic residues. The SAM domain maps to 595 to 656 (ELPQDIPSWL…LKSFQEVAPL (62 aa)). Polar residues predominate over residues 670–681 (KNQSSESLTSFK). S673 carries the phosphoserine modification. Over residues 691–702 (SGSMSNEISSNS) the composition is skewed to low complexity. Positions 703–713 (TKQDVSSSSMD) are enriched in polar residues.

This sequence belongs to the VTS1 family. In terms of assembly, monomer. Binds to RNA.

It is found in the cytoplasm. Its subcellular location is the cytosol. The protein localises to the P-body. RNA-binding protein involved in post-transcriptional regulation through transcript degradation. The sequence is that of RNA-binding protein vts1 from Schizosaccharomyces pombe (strain 972 / ATCC 24843) (Fission yeast).